A 257-amino-acid chain; its full sequence is 5'-nucleotidase SurE (257 aa).

4 residues coordinate a divalent metal cation: Asp-11, Asp-12, Ser-42, and Asn-99.

The protein belongs to the SurE nucleotidase family. A divalent metal cation serves as cofactor.

Its subcellular location is the cytoplasm. It carries out the reaction a ribonucleoside 5'-phosphate + H2O = a ribonucleoside + phosphate. Nucleotidase that shows phosphatase activity on nucleoside 5'-monophosphates. The chain is 5'-nucleotidase SurE from Flavobacterium psychrophilum (strain ATCC 49511 / DSM 21280 / CIP 103535 / JIP02/86).